Reading from the N-terminus, the 530-residue chain is Carbohydrate sulfotransferase 2 (530 aa).

Residues 1–54 (MSRSPQRALPPGALPRLLQAAPAAAPRALLPQWPRRPGRRWPASPLGMKVFRRK) lie on the Cytoplasmic side of the membrane. A helical; Signal-anchor for type II membrane protein transmembrane segment spans residues 55–75 (ALVLCAGYALLLVLTMLNLLD). The Lumenal portion of the chain corresponds to 76–530 (YKWHKEPLQQ…SKTLLRKPRL (455 aa)). Positions 89–119 (DGPLGAAAGAAGGSWGRPGPPPAGPPRAHAR) are disordered. 173-179 (WRSGSSF) contacts 3'-phosphoadenylyl sulfate. Asn-243 carries N-linked (GlcNAc...) asparagine glycosylation. 332 to 340 (RDPRAVASS) is a binding site for 3'-phosphoadenylyl sulfate. 2 N-linked (GlcNAc...) asparagine glycosylation sites follow: Asn-457 and Asn-475.

It belongs to the sulfotransferase 1 family. Gal/GlcNAc/GalNAc subfamily. In terms of assembly, homodimer; disulfide-linked. Homodimerization is not essential for enzyme activity. Glycosylation at Asn-475 is required for catalytic activity. Widely expressed. Highly expressed in bone marrow, peripheral blood leukocytes, spleen, brain, spinal cord, ovary and placenta. Expressed by high endothelial cells (HEVs) and leukocytes.

The protein localises to the golgi apparatus. It localises to the trans-Golgi network membrane. It carries out the reaction 3-O-{N-acetyl-beta-D-glucosaminyl-(1-&gt;3)-beta-D-galactosyl-(1-&gt;3)-N-acetyl-alpha-D-galactosaminyl}-L-threonyl-[protein] + 3'-phosphoadenylyl sulfate = 3-O-{6-O-sulfo-N-acetyl-beta-D-glucosaminyl-(1-&gt;3)-beta-D-galactosyl-(1-&gt;3)-N-acetyl-alpha-D-galactosaminyl}-L-threonyl-[protein] + adenosine 3',5'-bisphosphate + H(+). It catalyses the reaction 3-O-{N-acetyl-beta-D-glucosaminyl-(1-&gt;3)-beta-D-galactosyl-(1-&gt;3)-N-acetyl-alpha-D-galactosaminyl}-L-seryl-[protein] + 3'-phosphoadenylyl sulfate = 3-O-{6-O-sulfo-N-acetyl-beta-D-glucosaminyl-(1-&gt;3)-beta-D-galactosyl-(1-&gt;3)-N-acetyl-alpha-D-galactosaminyl}-L-seryl-[protein] + adenosine 3',5'-bisphosphate + H(+). The enzyme catalyses a 3-O-{beta-D-galactosyl-(1-&gt;3)-[N-acetyl-beta-D-glucosaminyl-(1-&gt;6)]-N-acetyl-alpha-D-galactosaminyl}-L-threonyl-[protein] + 3'-phosphoadenylyl sulfate = 3-O-{beta-D-galactosyl-(1-&gt;3)-[6-O-sulfo-N-acetyl-beta-D-glucosaminyl-(1-&gt;6)]-N-acetyl-alpha-D-galactosaminyl}-L-threonyl-[protein] + adenosine 3',5'-bisphosphate + H(+). The catalysed reaction is 3-O-{beta-D-galactosyl-(1-&gt;3)-[N-acetyl-beta-D-glucosaminyl-(1-&gt;6)]-N-acetyl-alpha-D-galactosaminyl}-L-seryl-[protein] + 3'-phosphoadenylyl sulfate = 3-O-{beta-D-galactosyl-(1-&gt;3)-[6-O-sulfo-N-acetyl-beta-D-glucosaminyl-(1-&gt;6)]-N-acetyl-alpha-D-galactosaminyl}-L-seryl-[protein] + adenosine 3',5'-bisphosphate + H(+). The protein operates within protein modification; carbohydrate sulfation. Sulfotransferase that utilizes 3'-phospho-5'-adenylyl sulfate (PAPS) as sulfonate donor to catalyze the transfer of sulfate to position 6 of non-reducing N-acetylglucosamine (GlcNAc) residues within keratan-like structures on N-linked glycans and within mucin-associated glycans that can ultimately serve as SELL ligands. SELL ligands are present in high endothelial cells (HEVs) and play a central role in lymphocyte homing at sites of inflammation. Participates in biosynthesis of the SELL ligand sialyl 6-sulfo Lewis X and in lymphocyte homing to Peyer patches. Has no activity toward O-linked sugars. Its substrate specificity may be influenced by its subcellular location. Sulfates GlcNAc residues at terminal, non-reducing ends of oligosaccharide chains. The polypeptide is Carbohydrate sulfotransferase 2 (CHST2) (Homo sapiens (Human)).